A 172-amino-acid chain; its full sequence is Gastrula zinc finger protein XlCGF51.1A (172 aa).

6 consecutive C2H2-type zinc fingers follow at residues 6–28, 34–56, 62–84, 90–112, 122–144, and 150–172; these read FSCSDCGARFTYRSLLRRHNKIH, LICSECGKPFTSESALTAHQRSH, FSCTDCEKCFAQRMHLIEHQRTH, FSCTVCGEMFTYRAQFSKHMLKH, LDCSHCGKHFTSRSDLTVHRKSH, and LQCSDCGKCFKYQSQLASHQRVH.

This sequence belongs to the krueppel C2H2-type zinc-finger protein family.

The protein resides in the nucleus. In terms of biological role, may be involved in transcriptional regulation. This Xenopus laevis (African clawed frog) protein is Gastrula zinc finger protein XlCGF51.1A.